A 195-amino-acid chain; its full sequence is Protein GrpE (195 aa).

This sequence belongs to the GrpE family. Homodimer.

Its subcellular location is the cytoplasm. Participates actively in the response to hyperosmotic and heat shock by preventing the aggregation of stress-denatured proteins, in association with DnaK and GrpE. It is the nucleotide exchange factor for DnaK and may function as a thermosensor. Unfolded proteins bind initially to DnaJ; upon interaction with the DnaJ-bound protein, DnaK hydrolyzes its bound ATP, resulting in the formation of a stable complex. GrpE releases ADP from DnaK; ATP binding to DnaK triggers the release of the substrate protein, thus completing the reaction cycle. Several rounds of ATP-dependent interactions between DnaJ, DnaK and GrpE are required for fully efficient folding. The chain is Protein GrpE from Blochmanniella pennsylvanica (strain BPEN).